Reading from the N-terminus, the 113-residue chain is Transcriptional regulator RamA (113 aa).

Residues 9–107 (DTIVEWIDDN…NLPPGAYRKE (99 aa)) enclose the HTH araC/xylS-type domain. 2 DNA-binding regions (H-T-H motif) span residues 26–47 (DDIA…MQYK) and 74–97 (VYDI…TRTF).

In terms of biological role, transcriptional regulator. Binds to regulatory regions of target genes, including efflux pump operon acrAB and outer membrane protein gene tolC. Represses transcription of genes belonging to the flagellar regulon, including flhD, flhB and fliC; probably thereby leading to repression of motility. Represses expression of the flhDC operon in a post-transcriptional manner. Activates expression of acrAB, perhaps thereby conferring multidrug resistance. Involved in indole- and bile-mediated regulation of acrAB; binding of bile to RamA may contribute to activation of expression of acrAB. Plays a role in regulating virulence in mice. In Salmonella typhimurium (strain LT2 / SGSC1412 / ATCC 700720), this protein is Transcriptional regulator RamA.